We begin with the raw amino-acid sequence, 722 residues long: Disintegrin and metalloproteinase domain-containing protein 21 (722 aa).

An N-terminal signal peptide occupies residues 1–31; it reads MAVDGTLVYIRVTLLLLWLGVFLSISGYCQA. A propeptide spanning residues 32–196 is cleaved from the precursor; sequence GPSQHFTSPE…FEEAENSALE (165 aa). N164 is a glycosylation site (N-linked (GlcNAc...) asparagine). The Cysteine switch signature appears at 171–178; the sequence is MRCGLTEK. C173 serves as a coordination point for Zn(2+). Residues 197 to 681 lie on the Extracellular side of the membrane; sequence PKSAGDWWTH…DSGPASAKRG (485 aa). Residues 208 to 398 form the Peptidase M12B domain; sequence WFLELVVVVN…NQGSCLHNPP (191 aa). N227 carries an N-linked (GlcNAc...) asparagine glycan. 3 disulfide bridges follow: C316–C393, C356–C378, and C358–C363. A Zn(2+)-binding site is contributed by H341. The active site involves E342. Zn(2+) is bound by residues H345 and H351. 5 N-linked (GlcNAc...) asparagine glycosylation sites follow: N377, N437, N478, N546, and N600. The region spanning 406-492 is the Disintegrin domain; sequence LKRCGNGVVE…QCPEDRYVQD (87 aa). Cysteines 464 and 484 form a disulfide. 3 cysteine pairs are disulfide-bonded: C634–C645, C639–C651, and C653–C662. One can recognise an EGF-like domain in the interval 634 to 663; the sequence is CLPETCNMKGICNNKHHCHCGYGWSPPYCQ. A helical membrane pass occupies residues 682 to 702; sequence VFLPLIVIPSLSVLTFLFTVG. The Cytoplasmic portion of the chain corresponds to 703-722; sequence LLMYLRQCSGPKETKAHSSG.

The cofactor is Zn(2+). Post-translationally, has no obvious cleavage site for furin endopeptidase, suggesting that the proteolytic processing is regulated.

The protein resides in the membrane. Functionally, may be involved in sperm maturation and/or fertilization. May also be involved in epithelia functions associated with establishing and maintaining gradients of ions or nutrients. The chain is Disintegrin and metalloproteinase domain-containing protein 21 (ADAM21) from Homo sapiens (Human).